A 311-amino-acid polypeptide reads, in one-letter code: Glutaminase (311 aa).

Serine 69, asparagine 120, glutamate 164, asparagine 171, tyrosine 195, tyrosine 247, and valine 265 together coordinate substrate.

This sequence belongs to the glutaminase family. In terms of assembly, homotetramer.

The enzyme catalyses L-glutamine + H2O = L-glutamate + NH4(+). The sequence is that of Glutaminase from Colwellia psychrerythraea (strain 34H / ATCC BAA-681) (Vibrio psychroerythus).